The sequence spans 510 residues: MAFNFGAPSGTSGTSTATAAPAGGFGGFGTTTTTAGSAFSFSAPTNTGSTGLLGGTQNKGFGFGTGFGTTTGTGTGLGTGLGTGLGFGGFNTQQQQQQQQTSLGGLFSQPTQAPAQSTQLINTASALSAPTLLGDERDAILAKWNQLQAFWGTGKGYFNNNIPPVEFTQENPFCRFKAVGYSCMPNNKDEDGLVVLIFNKKETDIRSQQQQLVESLHKVLGGNQTLTVNVEGIKTLPDDQTEVVIYVVERSPNGTSRRVPATTLYAHFEQANIKAQLQQLGVTLSMTRTELSPAQIKQLLQNPPAGVDPIIWEQAKVDNPDSEKLIPVPMVGFKELLRRLKVQDQMTKQHQTRLDIISEDISELQKNQTTTMAKIAQYKRKLMELSHRTLQVLIKQEIQRKSGYAIQADEEQLRVQLDTIQGELNAPTQFKGRLNELMSQIRMQNHFGAVKSEEKYYIDADLLREIKQHLKQQQEGLSHLISIIKDDLEDIKLVEHGLNETIHSRGGVFS.

A run of 8 repeats spans residues 5–6 (FG), 25–26 (FG), 28–29 (FG), 61–62 (FG), 63–64 (FG), 67–68 (FG), 87–88 (FG), and 447–448 (FG). The tract at residues 5–448 (FGAPSGTSGT…SQIRMQNHFG (444 aa)) is 8 X 2 AA repeats of F-G.

Belongs to the NUP54 family. Component of the p62 complex, a complex composed of NUP62, NUP54, and the isoform p58 and isoform p45 of NUP58. Interacts with NUTF2. Post-translationally, O-glycosylated.

Its subcellular location is the nucleus. The protein resides in the nuclear pore complex. It localises to the nucleus membrane. Functionally, component of the nuclear pore complex, a complex required for the trafficking across the nuclear membrane. This Mus musculus (Mouse) protein is Nuclear pore complex protein Nup54 (Nup54).